A 926-amino-acid chain; its full sequence is Eukaryotic translation initiation factor 3 subunit C (926 aa).

2 disordered regions span residues 1–36 (MSRF…KQPI) and 158–309 (AYKQ…KVKG). Low complexity predominate over residues 8-21 (GSDSESESSLSGDE). The segment covering 165–189 (ESADEDQEKDEDSEASSSSDDDSDE) has biased composition (acidic residues). The span at 207 to 216 (SRSKFLKKEE) shows a compositional bias: basic and acidic residues. The segment covering 217–243 (AEDEAESSEDEDWGSDSDESDSDESDD) has biased composition (acidic residues). Over residues 258–275 (TVTEGDRQAVEKKKEDKA) the composition is skewed to basic and acidic residues. Acidic residues predominate over residues 289–302 (EGEEGEEDDNEGGG). The 177-residue stretch at 675 to 851 (FHMHINLELL…QTVVMHGTEP (177 aa)) folds into the PCI domain. The tract at residues 880 to 926 (QGSYGGYFNRGDRGDRGDRDQKDQYQRKEGGYMRRGYRRDQQGQSNY) is disordered. Residues 889 to 911 (RGDRGDRGDRDQKDQYQRKEGGY) are compositionally biased toward basic and acidic residues.

Belongs to the eIF-3 subunit C family. In terms of assembly, component of the eukaryotic translation initiation factor 3 (eIF-3) complex, which is composed of 13 subunits: eif3a, eif3b, eif3c, eif3d, eif3e, eif3f, eif3g, eif3h, eif3i, eif3j, eif3k, eif3l and eif3m.

It localises to the cytoplasm. In terms of biological role, component of the eukaryotic translation initiation factor 3 (eIF-3) complex, which is involved in protein synthesis of a specialized repertoire of mRNAs and, together with other initiation factors, stimulates binding of mRNA and methionyl-tRNAi to the 40S ribosome. The eIF-3 complex specifically targets and initiates translation of a subset of mRNAs involved in cell proliferation. This chain is Eukaryotic translation initiation factor 3 subunit C (eif3c), found in Xenopus laevis (African clawed frog).